The primary structure comprises 402 residues: S-adenosylmethionine synthase (402 aa).

His-16 contributes to the ATP binding site. Asp-18 is a Mg(2+) binding site. Residue Glu-44 participates in K(+) binding. 2 residues coordinate L-methionine: Glu-57 and Gln-103. Residues 103 to 113 (QSPDIAQGVDT) form a flexible loop region. ATP contacts are provided by residues 178-180 (DGK), 249-250 (KF), Asp-258, 264-265 (RK), Ala-281, and Lys-285. Asp-258 is a binding site for L-methionine. Lys-289 is a binding site for L-methionine.

This sequence belongs to the AdoMet synthase family. As to quaternary structure, homotetramer; dimer of dimers. Mg(2+) is required as a cofactor. K(+) serves as cofactor.

It is found in the cytoplasm. The enzyme catalyses L-methionine + ATP + H2O = S-adenosyl-L-methionine + phosphate + diphosphate. It participates in amino-acid biosynthesis; S-adenosyl-L-methionine biosynthesis; S-adenosyl-L-methionine from L-methionine: step 1/1. Its function is as follows. Catalyzes the formation of S-adenosylmethionine (AdoMet) from methionine and ATP. The overall synthetic reaction is composed of two sequential steps, AdoMet formation and the subsequent tripolyphosphate hydrolysis which occurs prior to release of AdoMet from the enzyme. The protein is S-adenosylmethionine synthase of Mycolicibacterium vanbaalenii (strain DSM 7251 / JCM 13017 / BCRC 16820 / KCTC 9966 / NRRL B-24157 / PYR-1) (Mycobacterium vanbaalenii).